The sequence spans 594 residues: Alanine--tRNA ligase (594 aa).

H456, H460, C558, and H562 together coordinate Zn(2+).

Belongs to the class-II aminoacyl-tRNA synthetase family. Requires Zn(2+) as cofactor.

It is found in the cytoplasm. It carries out the reaction tRNA(Ala) + L-alanine + ATP = L-alanyl-tRNA(Ala) + AMP + diphosphate. Catalyzes the attachment of alanine to tRNA(Ala) in a two-step reaction: alanine is first activated by ATP to form Ala-AMP and then transferred to the acceptor end of tRNA(Ala). Also edits incorrectly charged Ser-tRNA(Ala) and Gly-tRNA(Ala) via its editing domain. The protein is Alanine--tRNA ligase (alaS) of Borrelia garinii subsp. bavariensis (strain ATCC BAA-2496 / DSM 23469 / PBi) (Borreliella bavariensis).